Here is a 601-residue protein sequence, read N- to C-terminus: Leucine-rich repeat-containing protein 40 (601 aa).

LRR repeat units lie at residues Ala-33–Leu-56, Gln-79–Leu-101, Leu-102–Asp-124, Leu-125–Leu-148, Asn-150–Gln-170, Leu-171–Asn-193, Leu-194–Met-217, Asn-219–Gln-239, Met-240–Thr-264, Lys-266–His-285, Leu-286–Leu-308, Leu-309–Lys-334, Lys-336–Lys-355, Ile-397–Ala-420, Gly-423–Leu-446, Lys-447–His-469, Leu-470–Gly-492, Leu-493–Ile-516, Ser-518–Thr-539, Leu-540–Cys-563, and Ser-565–Lys-586.

In Danio rerio (Zebrafish), this protein is Leucine-rich repeat-containing protein 40 (lrrc40).